We begin with the raw amino-acid sequence, 540 residues long: ADP,ATP carrier protein 2 (540 aa).

11 helical membrane-spanning segments follow: residues 24-44 (FSKF…YCLL), 62-82 (VIPF…TMVY), 94-114 (VFYC…VIIY), 151-171 (IYYV…FWGL), 223-243 (SVML…IWLY), 295-315 (LLGL…FEVV), 337-357 (ITTL…GQCI), 367-387 (LVTP…IFAA), 391-411 (ISIF…WTGG), 458-478 (SGGS…AASL), and 480-500 (VIAL…AYIG).

Belongs to the ADP/ATP translocase tlc family.

It is found in the cell membrane. This Chlamydia pneumoniae (Chlamydophila pneumoniae) protein is ADP,ATP carrier protein 2 (tlcB).